We begin with the raw amino-acid sequence, 419 residues long: L-rhamnose isomerase (419 aa).

Residues His262, Asp294, and Asp296 each contribute to the Mn(2+) site.

It belongs to the rhamnose isomerase family. Homotetramer. Requires Mn(2+) as cofactor.

It localises to the cytoplasm. The enzyme catalyses L-rhamnopyranose = L-rhamnulose. The protein operates within carbohydrate degradation; L-rhamnose degradation; glycerone phosphate from L-rhamnose: step 1/3. Catalyzes the interconversion of L-rhamnose and L-rhamnulose. This is L-rhamnose isomerase from Escherichia coli O9:H4 (strain HS).